A 163-amino-acid chain; its full sequence is Endoribonuclease YbeY (163 aa).

Positions 116, 120, and 126 each coordinate Zn(2+).

Belongs to the endoribonuclease YbeY family. Zn(2+) is required as a cofactor.

It localises to the cytoplasm. Its function is as follows. Single strand-specific metallo-endoribonuclease involved in late-stage 70S ribosome quality control and in maturation of the 3' terminus of the 16S rRNA. The chain is Endoribonuclease YbeY from Idiomarina loihiensis (strain ATCC BAA-735 / DSM 15497 / L2-TR).